Here is a 206-residue protein sequence, read N- to C-terminus: Hypoxanthine-guanine phosphoribosyltransferase (206 aa).

GMP contacts are provided by residues 110 to 118 (DEVDDTRTT), lysine 154, and 181 to 187 (WIMYPWE). The active-site Proton acceptor is aspartate 114.

It belongs to the purine/pyrimidine phosphoribosyltransferase family. In terms of assembly, dimer. It depends on Mg(2+) as a cofactor.

It localises to the endoplasmic reticulum. It catalyses the reaction IMP + diphosphate = hypoxanthine + 5-phospho-alpha-D-ribose 1-diphosphate. The enzyme catalyses GMP + diphosphate = guanine + 5-phospho-alpha-D-ribose 1-diphosphate. Functionally, converts guanine to guanosine monophosphate, and hypoxanthine to inosine monophosphate. Transfers the 5-phosphoribosyl group from 5-phosphoribosylpyrophosphate onto the purine. Plays a central role in the generation of purine nucleotides through the purine salvage pathway. This Schizosaccharomyces pombe (strain 972 / ATCC 24843) (Fission yeast) protein is Hypoxanthine-guanine phosphoribosyltransferase (hpt1).